Consider the following 275-residue polypeptide: Small ribosomal subunit protein uS3 (275 aa).

The KH type-2 domain maps to 39–107 (VRIYLKKKLK…PVHVNIEEIR (69 aa)). Positions 216–275 (AAATSAEPAAEEKKTRRAPSKTAARKPAAGTDKPLVAAKPAVKRVRKVETPAADTQKSGE) are disordered.

Belongs to the universal ribosomal protein uS3 family. In terms of assembly, part of the 30S ribosomal subunit. Forms a tight complex with proteins S10 and S14.

In terms of biological role, binds the lower part of the 30S subunit head. Binds mRNA in the 70S ribosome, positioning it for translation. This chain is Small ribosomal subunit protein uS3, found in Polynucleobacter asymbioticus (strain DSM 18221 / CIP 109841 / QLW-P1DMWA-1) (Polynucleobacter necessarius subsp. asymbioticus).